We begin with the raw amino-acid sequence, 220 residues long: Catechol O-methyltransferase (220 aa).

S-adenosyl-L-methionine-binding positions include Val44, Glu66, 68-69 (GT), Ser74, Glu92, and Ala121. Asp139 contacts a divalent metal cation. Residue Asp141 participates in S-adenosyl-L-methionine binding. Residues Asp165 and Asn166 each coordinate a divalent metal cation.

It belongs to the class I-like SAM-binding methyltransferase superfamily. Cation-dependent O-methyltransferase family. In terms of assembly, homodimer. Requires a divalent metal cation as cofactor.

The catalysed reaction is a catechol + S-adenosyl-L-methionine = a guaiacol + S-adenosyl-L-homocysteine + H(+). Inhibited by EDTA. Functionally, catechol O-methyltransferase that can use various catechol-like compounds such as gallic acid (GA), 3,4-dihydroxy-5-methoxy-benzoic acid (5OMeBA), protocatechuic acid (PCA), 3,4-dihydroxy-benzaldehyde (DHA), dopamine, caffeic acid (CA), luteolin, quercetin, and 5-hydroxyuridine. The sequence is that of Catechol O-methyltransferase from Mycobacterium tuberculosis (strain ATCC 25618 / H37Rv).